The chain runs to 502 residues: Activin receptor type-1-like (502 aa).

A signal peptide spans 1-22 (MTLGSFRRGLLMLSVAFGLTRG). Over 23–119 (DLAKPSKLVN…EEPEVDAHLP (97 aa)) the chain is Extracellular. An N-linked (GlcNAc...) asparagine glycan is attached at asparagine 32. 3 disulfide bridges follow: cysteine 33–cysteine 50, cysteine 35–cysteine 40, and cysteine 45–cysteine 68. Residues 72–75 (NQEL) form a mediates specificity for BMP ligand region. Intrachain disulfides connect cysteine 76–cysteine 88 and cysteine 89–cysteine 94. The N-linked (GlcNAc...) asparagine glycan is linked to asparagine 97. Residues 120–140 (LILGPVLALPVLVALGALGLW) form a helical membrane-spanning segment. The Cytoplasmic portion of the chain corresponds to 141-502 (RVRRRQEKQR…HNPEKPKVIH (362 aa)). Phosphoserine is present on residues serine 154, serine 159, and serine 160. The 30-residue stretch at 171-200 (SMLGDFLDSDCTTGSGSGLPFLVQRTVARQ) folds into the GS domain. The Protein kinase domain maps to 201 to 502 (VALVECVGKG…HNPEKPKVIH (302 aa)). ATP contacts are provided by residues 207–215 (VGKGRYGEV) and lysine 228. Aspartate 329 acts as the Proton acceptor in catalysis.

This sequence belongs to the protein kinase superfamily. TKL Ser/Thr protein kinase family. TGFB receptor subfamily. As to quaternary structure, interacts with TSC22D1/TSC-22. Mg(2+) serves as cofactor. Mn(2+) is required as a cofactor.

It localises to the cell membrane. The catalysed reaction is L-threonyl-[receptor-protein] + ATP = O-phospho-L-threonyl-[receptor-protein] + ADP + H(+). It carries out the reaction L-seryl-[receptor-protein] + ATP = O-phospho-L-seryl-[receptor-protein] + ADP + H(+). Functionally, type I receptor for TGF-beta family ligands BMP9/GDF2 and BMP10 and important regulator of normal blood vessel development. On ligand binding, forms a receptor complex consisting of two type II and two type I transmembrane serine/threonine kinases. Type II receptors phosphorylate and activate type I receptors which autophosphorylate, then bind and activate SMAD transcriptional regulators. May bind activin as well. The polypeptide is Activin receptor type-1-like (Acvrl1) (Mus musculus (Mouse)).